Consider the following 266-residue polypeptide: GTP-binding protein Rhes (266 aa).

Residue 26-33 (GASRVGKS) participates in GTP binding. An Effector region motif is present at residues 48-56 (YTPTIEDFH). Residues 73 to 77 (DTSGN) and 140 to 143 (NKND) each bind GTP. The segment at 189 to 235 (MAKLPHEMSPALHHKISVQYGDAFHPRPFCMRRTKVAGAYGMVSPFA) is interaction with GNB1, GNB2 and GNB3. Cys263 is modified (cysteine methyl ester). Cys263 carries S-farnesyl cysteine lipidation. Residues 264 to 266 (SIQ) constitute a propeptide, removed in mature form.

It belongs to the small GTPase superfamily. RasD family. Monomer (Potential). Interacts with PIK3CA and UBE2I. Interacts with GNB1, GNB2 and GNB3. Farnesylated. Farnesylation is required for membrane targeting. As to expression, highly expressed in brain; prominently in the striatum and weakly in kidney, thyroid, lung, heart and testis. Not expressed in liver. Expressed in pancreatic cell lines and in a embryonic stem cell line.

The protein resides in the cell membrane. GTPase signaling protein that binds to and hydrolyzes GTP. Regulates signaling pathways involving G-proteins-coupled receptor and heterotrimeric proteins such as GNB1, GNB2 and GNB3. May be involved in selected striatal competencies, mainly locomotor activity and motor coordination. The polypeptide is GTP-binding protein Rhes (Rasd2) (Mus musculus (Mouse)).